The sequence spans 501 residues: ATP synthase subunit alpha, chloroplastic (501 aa).

Residue 170-177 coordinates ATP; that stretch reads GDRQTGKT.

This sequence belongs to the ATPase alpha/beta chains family. F-type ATPases have 2 components, CF(1) - the catalytic core - and CF(0) - the membrane proton channel. CF(1) has five subunits: alpha(3), beta(3), gamma(1), delta(1), epsilon(1). CF(0) has four main subunits: a, b, b' and c.

The protein resides in the plastid. Its subcellular location is the chloroplast thylakoid membrane. It carries out the reaction ATP + H2O + 4 H(+)(in) = ADP + phosphate + 5 H(+)(out). Its function is as follows. Produces ATP from ADP in the presence of a proton gradient across the membrane. The alpha chain is a regulatory subunit. In Nephroselmis olivacea (Green alga), this protein is ATP synthase subunit alpha, chloroplastic.